Here is a 428-residue protein sequence, read N- to C-terminus: C4-dicarboxylate transport protein (428 aa).

A run of 9 helical transmembrane segments spans residues 8–28 (SLYV…HFYP), 44–64 (LIKM…IAGM), 76–96 (VALL…LIIV), 142–162 (IGAF…LFGF), 184–204 (VIFG…FGAM), 222–242 (LIIC…GSIA), 289–309 (VVGL…SIYL), 326–346 (IFHQ…AAGV), and 352–372 (IVLA…LALI).

This sequence belongs to the dicarboxylate/amino acid:cation symporter (DAACS) (TC 2.A.23) family.

The protein localises to the cell inner membrane. Functionally, responsible for the transport of dicarboxylates such as succinate, fumarate, and malate from the periplasm across the membrane. This is C4-dicarboxylate transport protein from Klebsiella pneumoniae subsp. pneumoniae (strain ATCC 700721 / MGH 78578).